The following is a 490-amino-acid chain: Beta-1,3-glucan-binding protein 1 (490 aa).

An N-terminal signal peptide occupies residues 1-19 (MYKQTVVIFLLCFFICVSC). The region spanning 20–119 (YEVPPAKLEA…GEWTVTGYVD (100 aa)) is the CBM39 domain. The region spanning 152 to 490 (PPTSQNTYPC…QVDYVRVYAL (339 aa)) is the GH16 domain. N-linked (GlcNAc...) asparagine glycosylation occurs at Asn372.

This sequence belongs to the insect beta-1,3-glucan binding protein family. Monomer. In terms of tissue distribution, hemolymph.

The protein resides in the secreted. Plays a role in the recognition of invading microorganisms activating the phenoloxidase cascade. Binds specifically to beta-1,3-glucan. Binds the Aspergillus niger cell wall component alpha-1,3-glucan, a fungal pathogen-associated molecular pattern (PAMP) that activates the host immune response. In Galleria mellonella (Greater wax moth), this protein is Beta-1,3-glucan-binding protein 1.